Reading from the N-terminus, the 441-residue chain is Tol-Pal system protein TolB (441 aa).

The N-terminal stretch at 1-23 (MRNAIATVLLGLAMLLPVGAVQA) is a signal peptide. Positions 420–441 (RNLKPVKTPDGASDPSWSPLQN) are disordered.

Belongs to the TolB family. In terms of assembly, the Tol-Pal system is composed of five core proteins: the inner membrane proteins TolA, TolQ and TolR, the periplasmic protein TolB and the outer membrane protein Pal. They form a network linking the inner and outer membranes and the peptidoglycan layer.

The protein localises to the periplasm. Functionally, part of the Tol-Pal system, which plays a role in outer membrane invagination during cell division and is important for maintaining outer membrane integrity. In Ruegeria sp. (strain TM1040) (Silicibacter sp.), this protein is Tol-Pal system protein TolB.